The chain runs to 308 residues: B3 domain-containing protein REM23 (308 aa).

The TF-B3 1 DNA-binding region spans 19 to 114; the sequence is FFKVLKRSDM…SFTVKIFNKD (96 aa). The interval 117 to 198 is disordered; that stretch reads EMMQPPQSRA…TERTQNSKRT (82 aa). Residues 121–133 show a composition bias toward polar residues; the sequence is PPQSRASFASSSR. Residues 134-145 are compositionally biased toward basic and acidic residues; sequence VKTEQDVKREEE. Residues 149–166 show a composition bias toward polar residues; that stretch reads SSDSRSRGPTTAAETNRG. Basic residues predominate over residues 168-177; the sequence is SYKRKLNFGK. Over residues 178–198 the composition is skewed to basic and acidic residues; the sequence is KKAEETQTYKRTERTQNSKRT. A DNA-binding region (TF-B3 2) is located at residues 216-308; that stretch reads VAGFKIFISK…LELLLVVSKP (93 aa).

It is found in the nucleus. The polypeptide is B3 domain-containing protein REM23 (REM23) (Arabidopsis thaliana (Mouse-ear cress)).